The sequence spans 583 residues: CTP synthase (583 aa).

An amidoligase domain region spans residues M1–L278. S20 serves as a coordination point for CTP. Residue S20 participates in UTP binding. ATP contacts are provided by residues S21–L26 and D78. Mg(2+)-binding residues include D78 and E152. CTP is bound by residues D159–E161, K199–Q204, and K235. UTP-binding positions include K199–Q204 and K235. The region spanning R303 to G551 is the Glutamine amidotransferase type-1 domain. G366 contacts L-glutamine. Catalysis depends on C393, which acts as the Nucleophile; for glutamine hydrolysis. L-glutamine-binding positions include L394–Q397, E416, and R477. Catalysis depends on residues H524 and E526. The tract at residues P559–G583 is disordered.

It belongs to the CTP synthase family. In terms of assembly, homotetramer.

The enzyme catalyses UTP + L-glutamine + ATP + H2O = CTP + L-glutamate + ADP + phosphate + 2 H(+). The catalysed reaction is L-glutamine + H2O = L-glutamate + NH4(+). It catalyses the reaction UTP + NH4(+) + ATP = CTP + ADP + phosphate + 2 H(+). The protein operates within pyrimidine metabolism; CTP biosynthesis via de novo pathway; CTP from UDP: step 2/2. Allosterically activated by GTP, when glutamine is the substrate; GTP has no effect on the reaction when ammonia is the substrate. The allosteric effector GTP functions by stabilizing the protein conformation that binds the tetrahedral intermediate(s) formed during glutamine hydrolysis. Inhibited by the product CTP, via allosteric rather than competitive inhibition. Catalyzes the ATP-dependent amination of UTP to CTP with either L-glutamine or ammonia as the source of nitrogen. Regulates intracellular CTP levels through interactions with the four ribonucleotide triphosphates. The chain is CTP synthase from Mycobacterium ulcerans (strain Agy99).